The sequence spans 421 residues: Forkhead box protein J1 (421 aa).

Disordered regions lie at residues 1 to 34 (MAES…DSLT) and 48 to 116 (KAPA…DYAT). Positions 66–80 (PGSAAPGSPLAADPA) are enriched in low complexity. Residues 90–99 (KPTSSCTSRS) are compositionally biased toward polar residues. A DNA-binding region (fork-head) is located at residues 120–210 (VKPPYSYATL…YAERLLSGAF (91 aa)). Residues 261–302 (AGWGAGEGRLGHKRKQPLPKRVAKVPRPPSTLLPTPEEQGEL) are disordered. The segment covering 271–284 (GHKRKQPLPKRVAK) has biased composition (basic residues).

It belongs to the FOXJ1 family. Testis, oviduct, lung and brain cortex.

It is found in the nucleus. In terms of biological role, transcription factor specifically required for the formation of motile cilia. Acts by activating transcription of genes that mediate assembly of motile cilia, such as CFAP157. Binds the DNA consensus sequences 5'-HWDTGTTTGTTTA-3' or 5'-KTTTGTTGTTKTW-3' (where H is not G, W is A or T, D is not C, and K is G or T). Activates the transcription of a variety of ciliary proteins in the developing brain and lung. The protein is Forkhead box protein J1 of Homo sapiens (Human).